A 285-amino-acid chain; its full sequence is Single myb histone 3 (285 aa).

A disordered region spans residues 1–35 (MGAPKQKWTSEEEDALRRGVRKHGAGKWRTIQKDP). Residues 1-60 (MGAPKQKWTSEEEDALRRGVRKHGAGKWRTIQKDPQFSPILSSRSNIDLKDKWRNLSFSA) enclose the HTH myb-type domain. Positions 28–56 (WRTIQKDPQFSPILSSRSNIDLKDKWRNL) form a DNA-binding region, H-T-H motif. The 69-residue stretch at 113–181 (TPPKYGAMIM…KVDNFYRLPD (69 aa)) folds into the H15 domain. Positions 226 to 255 (VKVTDAEAKAHDAHDQMMEAERMLKMAEDT) form a coiled coil.

It belongs to the histone H1/H5 family. SMH subfamily. Forms a homodimer and heterodimers.

The protein resides in the nucleus. Its subcellular location is the chromosome. It is found in the nucleolus. The protein localises to the telomere. Binds preferentially double-stranded telomeric repeats, but may also bind to the single telomeric strand. This chain is Single myb histone 3 (SMH3), found in Zea mays (Maize).